The primary structure comprises 428 residues: Elongation factor 1-alpha (428 aa).

The tr-type G domain occupies lysine 5–valine 217. The G1 stretch occupies residues glycine 14 to serine 21. Glycine 14–serine 21 contributes to the GTP binding site. Serine 21 provides a ligand contact to Mg(2+). A G2 region spans residues glycine 68 to aspartate 72. The interval aspartate 89–glycine 92 is G3. GTP contacts are provided by residues aspartate 89 to histidine 93 and asparagine 144 to aspartate 147. The interval asparagine 144–aspartate 147 is G4. The segment at serine 181–tryptophan 183 is G5.

This sequence belongs to the TRAFAC class translation factor GTPase superfamily. Classic translation factor GTPase family. EF-Tu/EF-1A subfamily.

Its subcellular location is the cytoplasm. The catalysed reaction is GTP + H2O = GDP + phosphate + H(+). GTP hydrolase that promotes the GTP-dependent binding of aminoacyl-tRNA to the A-site of ribosomes during protein biosynthesis. The chain is Elongation factor 1-alpha from Pyrococcus furiosus (strain ATCC 43587 / DSM 3638 / JCM 8422 / Vc1).